A 524-amino-acid polypeptide reads, in one-letter code: 2-isopropylmalate synthase (524 aa).

The Pyruvate carboxyltransferase domain occupies 15–277 (VVIFDTTMRD…ETKIDTTHIT (263 aa)). Mn(2+) contacts are provided by aspartate 24, histidine 212, histidine 214, and asparagine 248. The interval 401 to 524 (RVQRLRVVAG…RPEAAIASGF (124 aa)) is regulatory domain.

The protein belongs to the alpha-IPM synthase/homocitrate synthase family. LeuA type 1 subfamily. Homodimer. Requires Mn(2+) as cofactor.

It localises to the cytoplasm. The enzyme catalyses 3-methyl-2-oxobutanoate + acetyl-CoA + H2O = (2S)-2-isopropylmalate + CoA + H(+). The protein operates within amino-acid biosynthesis; L-leucine biosynthesis; L-leucine from 3-methyl-2-oxobutanoate: step 1/4. Its function is as follows. Catalyzes the condensation of the acetyl group of acetyl-CoA with 3-methyl-2-oxobutanoate (2-ketoisovalerate) to form 3-carboxy-3-hydroxy-4-methylpentanoate (2-isopropylmalate). This is 2-isopropylmalate synthase from Caulobacter sp. (strain K31).